The sequence spans 475 residues: MNTALAQQIANEGGVEAWMIAQQHKSLLRFLTCGSVDDGKSTLIGRLLHDTRQIYEDQLSSLHNDSKRHGTQGEKLDLALLVDGLQAEREQGITIDVAYRYFSTEKRKFIIADTPGHEQYTRNMATGASTCELAILLIDARKGVLDQTRRHSFISTLLGIKHLVVAINKMDLVDYSEETFTRIRKDYLTFAEQLPGNLDIRFVPLSALEGDNVASQSESMPWYSGPTLLEVLETVEIQRVVDAQPMRFPVQYVNRPNLDFRGYAGTLASGRVEVGQRVKVLPSGVESNVARIVTFDGDHEEAFAGEAITLVLTDEIDISRGDLLLAADEALPAVQSASVDVVWMAEQPLSPGQSYDIKIAGKKTRARVDGIRYQVDINNLTQREVENLPLNGIGLVDLTFDEPLVLDRYQQNPVTGGLIFIDRLSNVTVGAGMVHEPVSQATAAPSEFSAFELELNALVRRHFSHWGARDLLGDK.

A tr-type G domain is found at 25–239 (KSLLRFLTCG…EVLETVEIQR (215 aa)). Residues 34-41 (GSVDDGKS) are G1. 34–41 (GSVDDGKS) contacts GTP. The tract at residues 92 to 96 (GITID) is G2. The interval 113–116 (DTPG) is G3. GTP contacts are provided by residues 113–117 (DTPGH) and 168–171 (NKMD). A G4 region spans residues 168–171 (NKMD). Residues 206–208 (SAL) are G5.

Belongs to the TRAFAC class translation factor GTPase superfamily. Classic translation factor GTPase family. CysN/NodQ subfamily. Heterodimer composed of CysD, the smaller subunit, and CysN.

It carries out the reaction sulfate + ATP + H(+) = adenosine 5'-phosphosulfate + diphosphate. Its pathway is sulfur metabolism; hydrogen sulfide biosynthesis; sulfite from sulfate: step 1/3. In terms of biological role, with CysD forms the ATP sulfurylase (ATPS) that catalyzes the adenylation of sulfate producing adenosine 5'-phosphosulfate (APS) and diphosphate, the first enzymatic step in sulfur assimilation pathway. APS synthesis involves the formation of a high-energy phosphoric-sulfuric acid anhydride bond driven by GTP hydrolysis by CysN coupled to ATP hydrolysis by CysD. In Escherichia coli (strain SE11), this protein is Sulfate adenylyltransferase subunit 1.